Consider the following 365-residue polypeptide: DNA replication and repair protein RecF (365 aa).

Residue 30-37 coordinates ATP; it reads GLNGSGKT.

This sequence belongs to the RecF family.

It is found in the cytoplasm. The RecF protein is involved in DNA metabolism; it is required for DNA replication and normal SOS inducibility. RecF binds preferentially to single-stranded, linear DNA. It also seems to bind ATP. This is DNA replication and repair protein RecF from Cellvibrio japonicus (strain Ueda107) (Pseudomonas fluorescens subsp. cellulosa).